The sequence spans 243 residues: Ubiquinone/menaquinone biosynthesis C-methyltransferase UbiE (243 aa).

S-adenosyl-L-methionine is bound by residues Thr69, Asp90, and Asp116–Ala117.

Belongs to the class I-like SAM-binding methyltransferase superfamily. MenG/UbiE family.

The catalysed reaction is a 2-demethylmenaquinol + S-adenosyl-L-methionine = a menaquinol + S-adenosyl-L-homocysteine + H(+). The enzyme catalyses a 2-methoxy-6-(all-trans-polyprenyl)benzene-1,4-diol + S-adenosyl-L-methionine = a 5-methoxy-2-methyl-3-(all-trans-polyprenyl)benzene-1,4-diol + S-adenosyl-L-homocysteine + H(+). Its pathway is quinol/quinone metabolism; menaquinone biosynthesis; menaquinol from 1,4-dihydroxy-2-naphthoate: step 2/2. It functions in the pathway cofactor biosynthesis; ubiquinone biosynthesis. In terms of biological role, methyltransferase required for the conversion of demethylmenaquinol (DMKH2) to menaquinol (MKH2) and the conversion of 2-polyprenyl-6-methoxy-1,4-benzoquinol (DDMQH2) to 2-polyprenyl-3-methyl-6-methoxy-1,4-benzoquinol (DMQH2). In Cupriavidus pinatubonensis (strain JMP 134 / LMG 1197) (Cupriavidus necator (strain JMP 134)), this protein is Ubiquinone/menaquinone biosynthesis C-methyltransferase UbiE.